A 418-amino-acid chain; its full sequence is Actin-related protein 3 (418 aa).

Met-1 carries the post-translational modification N-acetylmethionine.

It belongs to the actin family. ARP3 subfamily. Component of the Arp2/3 complex composed of arpB/Arp2, arpC/Arp3, arcA/p41-arc, arcB/p34-arc, arcC/p21-arc, arcD/p20-arc and arcE/p16-arc. Interacts with carmil (via the region between the LRR domain and COOH-terminal proline-rich domain); carmil is required for Arp2/3-dependent actin nucleation. Arp2/3 complex, MyoB, MyoC, and the alpha and beta subunits of capping protein all form a larger complex with carmil.

The protein localises to the cytoplasm. The protein resides in the cytoskeleton. It localises to the cytosol. It is found in the cell cortex. Its subcellular location is the cell projection. The protein localises to the pseudopodium. In terms of biological role, functions as ATP-binding component of the Arp2/3 complex which is involved in regulation of actin polymerization and together with an activating nucleation-promoting factor (NPF) mediates the formation of branched actin networks. Seems to contact the pointed end of the daughter actin filament. The Arp2/3 complex is involved in organizing the actin system in cell motility and chemotaxis, in phagocytosis and macropinocytosis, at late steps of endosome processing, and in mitosis. In concert with a group of other proteins, the Arp2/3 complex plays a general role in the rapid activation and adaptation of the actin system to its multiple functions. The polypeptide is Actin-related protein 3 (arpC) (Dictyostelium discoideum (Social amoeba)).